The following is a 313-amino-acid chain: 2-dehydro-3-deoxygluconokinase/2-dehydro-3-deoxygalactonokinase (313 aa).

Substrate is bound by residues 34 to 38 (GSELN), Tyr90, 106 to 108 (YYR), and Arg166. ATP-binding positions include 164-166 (NIR), 226-231 (KLGSKG), and 255-258 (GAGD). Residues Asp258 and Asp294 each coordinate substrate. Asp258 acts as the Proton acceptor in catalysis.

In terms of assembly, homohexamer; trimer of dimers.

It carries out the reaction 2-dehydro-3-deoxy-D-gluconate + ATP = 2-dehydro-3-deoxy-6-phospho-D-gluconate + ADP + H(+). The enzyme catalyses 2-dehydro-3-deoxy-D-galactonate + ATP = 2-dehydro-3-deoxy-6-phospho-D-galactonate + ADP + H(+). It participates in carbohydrate acid metabolism; 2-dehydro-3-deoxy-D-gluconate degradation; D-glyceraldehyde 3-phosphate and pyruvate from 2-dehydro-3-deoxy-D-gluconate: step 1/2. Functionally, involved in the degradation of glucose and galactose via the semi-phosphorylative Entner-Doudoroff pathway. Catalyzes the phosphorylation of 2-keto-3-deoxygluconate (KDG) and 2-keto-3-deoxygalactonate (KDGal) to produce 2-keto-3-deoxy-6-phosphogluconate (KDPG) and 2-keto-3-deoxy-6-phosphogalactonate (KDPGal), respectively. In Saccharolobus solfataricus (strain ATCC 35092 / DSM 1617 / JCM 11322 / P2) (Sulfolobus solfataricus), this protein is 2-dehydro-3-deoxygluconokinase/2-dehydro-3-deoxygalactonokinase (kdgK).